The sequence spans 152 residues: Natriuretic peptides A (152 aa).

The first 24 residues, 1-24 (MGSSAITVSFLLFLAFQLPGQTGA), serve as a signal peptide directing secretion. 2 consecutive propeptides follow at residues 25–122 (NPVY…TAPR) and 92–102 (EGGVLGRGPWE). Residues 58–101 (PSQVLSEQNEEAGAPLSPLSEMPPWMGEVNPAQREGGVLGRGPW) are disordered. Serine 128 carries the post-translational modification Phosphoserine. A disulfide bond links cysteine 129 and cysteine 145. The tract at residues 146–150 (NSFRY) is important for degradation of atrial natriuretic peptide by IDE.

It belongs to the natriuretic peptide family. In terms of assembly, homodimer; disulfide-linked antiparallel dimer. Post-translationally, the precursor molecule is proteolytically cleaved by CORIN at Arg-122 to produce the atrial natriuretic peptide. Undergoes further proteolytic cleavage by unknown proteases to give rise to long-acting natriuretic peptide, vessel dilator and kaliuretic peptide. Additional processing gives rise to the auriculin and atriopeptin peptides. In the kidneys, alternative processing by an unknown protease results in the peptide urodilatin. In terms of processing, cleavage by MME initiates degradation of the factor and thereby regulates its activity. Degradation by IDE results in reduced activation of NPR1 (in vitro). During IDE degradation, the resulting products can temporarily stimulate NPR2 to produce cGMP, before the fragments are completely degraded and inactivated by IDE (in vitro). Degraded by IDE. Post-translationally, phosphorylation on Ser-128 decreases vasorelaxant activity.

Its subcellular location is the secreted. It is found in the perikaryon. The protein localises to the cell projection. Its function is as follows. Hormone that plays a key role in mediating cardio-renal homeostasis, and is involved in vascular remodeling and regulating energy metabolism. Acts by specifically binding and stimulating NPR1 to produce cGMP, which in turn activates effector proteins, such as PRKG1, that drive various biological responses. Regulates vasodilation, natriuresis, diuresis and aldosterone synthesis and is therefore essential for regulating blood pressure, controlling the extracellular fluid volume and maintaining the fluid-electrolyte balance. Also involved in inhibiting cardiac remodeling and cardiac hypertrophy by inducing cardiomyocyte apoptosis and attenuating the growth of cardiomyocytes and fibroblasts. Plays a role in female pregnancy by promoting trophoblast invasion and spiral artery remodeling in uterus, and thus prevents pregnancy-induced hypertension. In adipose tissue, acts in various cGMP- and PKG-dependent pathways to regulate lipid metabolism and energy homeostasis. This includes up-regulating lipid metabolism and mitochondrial oxygen utilization by activating the AMP-activated protein kinase (AMPK), and increasing energy expenditure by acting via MAPK11 to promote the UCP1-dependent thermogenesis of brown adipose tissue. Binds the clearance receptor NPR3 which removes the hormone from circulation. Functionally, may have a role in cardio-renal homeostasis through regulation of natriuresis, diuresis, vasodilation, and inhibiting aldosterone synthesis. In vitro, promotes the production of cGMP and induces vasodilation. May promote natriuresis, at least in part, by enhancing prostaglandin E2 synthesis resulting in the inhibition of renal Na+-K+-ATPase. However reports on the involvement of this peptide in mammal blood volume and blood pressure homeostasis are conflicting; according to a report, in vivo it is not sufficient to activate cGMP and does not inhibit collecting duct transport nor effect diuresis and natriuresis. Appears to bind to specific receptors that are distinct from the receptors bound by atrial natriuretic peptide and vessel dilator. Possibly enhances protein excretion in urine by decreasing proximal tubular protein reabsorption. In terms of biological role, may have a role in cardio-renal homeostasis through regulation of natriuresis, diuresis, and vasodilation. In vitro, promotes the production of cGMP and induces vasodilation. May promote natriuresis, at least in part, by enhancing prostaglandin E2 synthesis resulting in the inhibition of renal Na+-K+-ATPase. However reports on the involvement of this peptide in mammal blood volume and blood pressure homeostasis are conflicting; according to a report it is not sufficient to activate cGMP and does not inhibit collecting duct transport nor effect diuresis and natriuresis. Appears to bind to specific receptors that are distinct from the receptors bound by the atrial natriuretic and long-acting natriuretic peptides. Possibly functions in protein excretion in urine by maintaining the integrity of the proximal tubules and enhancing protein excretion by decreasing proximal tubular protein reabsorption. May have a role in cardio-renal homeostasis through regulation of diuresis and inhibiting aldosterone synthesis. In vitro, promotes the production of cGMP and induces vasodilation. May promote natriuresis, at least in part, by enhancing prostaglandin E2 synthesis resulting in the inhibition of renal Na+-K+-ATPase. May have a role in potassium excretion but not sodium excretion (natriuresis). Possibly enhances protein excretion in urine by decreasing proximal tubular protein reabsorption. Its function is as follows. Hormone produced in the kidneys that appears to be important for maintaining cardio-renal homeostasis. Mediates vasodilation, natriuresis and diuresis primarily in the renal system, in order to maintain the extracellular fluid volume and control the fluid-electrolyte balance. Specifically binds and stimulates cGMP production by renal transmembrane receptors, likely NPR1. Urodilatin not ANP, may be the natriuretic peptide responsible for the regulation of sodium and water homeostasis in the kidney. Functionally, may have a role in cardio-renal homeostasis through regulation of natriuresis and vasodilation. In vivo promotes natriuresis and in vitro, vasodilates renal artery strips. In terms of biological role, may have a role in cardio-renal homeostasis through regulation of regulation of natriuresis and vasodilation. In vivo promotes natriuresis. In vitro, vasodilates intestinal smooth muscle but not smooth muscle strips. May have a role in cardio-renal homeostasis through regulation of natriuresis and vasodilation. In vivo promotes natriuresis. In vitro, selectively vasodilates intestinal and vascular smooth muscle strips. Its function is as follows. May have a role in cardio-renal homeostasis through regulation of natriuresis and vasodilation. In vivo promotes natriuresis. In vitro, selectively vasodilates intestinal smooth muscle but not vascular smooth muscle strips. The sequence is that of Natriuretic peptides A (NPPA) from Bos taurus (Bovine).